The chain runs to 118 residues: Waprin-Enh1 (118 aa).

The N-terminal stretch at 1-24 (MKTLTGLLLVGLLALWIGLPSTSS) is a signal peptide. WAP domains are found at residues 25 to 72 (KILF…RSCR) and 74 to 118 (PPVL…RICK). Disulfide bonds link Cys30–Cys63, Cys40–Cys67, Cys50–Cys62, Cys56–Cys71, Cys81–Cys109, Cys88–Cys113, Cys96–Cys108, and Cys102–Cys117.

Belongs to the venom waprin family. As to expression, expressed by the venom gland.

The protein resides in the secreted. Damages membranes of susceptible bacteria. Has no hemolytic activity. Not toxic to mice. Does not inhibit the proteinases elastase and cathepsin G. This is Waprin-Enh1 from Pseudoferania polylepis (Macleay's water snake).